The following is a 615-amino-acid chain: 1-deoxy-D-xylulose-5-phosphate synthase (615 aa).

Thiamine diphosphate contacts are provided by residues His-76 and Gly-117–Ser-119. Residue Asp-148 participates in Mg(2+) binding. Thiamine diphosphate is bound by residues Gly-149 to Ala-150, Asn-177, Tyr-284, and Glu-365. Asn-177 contributes to the Mg(2+) binding site.

The protein belongs to the transketolase family. DXPS subfamily. In terms of assembly, homodimer. It depends on Mg(2+) as a cofactor. Thiamine diphosphate is required as a cofactor.

It catalyses the reaction D-glyceraldehyde 3-phosphate + pyruvate + H(+) = 1-deoxy-D-xylulose 5-phosphate + CO2. It participates in metabolic intermediate biosynthesis; 1-deoxy-D-xylulose 5-phosphate biosynthesis; 1-deoxy-D-xylulose 5-phosphate from D-glyceraldehyde 3-phosphate and pyruvate: step 1/1. In terms of biological role, catalyzes the acyloin condensation reaction between C atoms 2 and 3 of pyruvate and glyceraldehyde 3-phosphate to yield 1-deoxy-D-xylulose-5-phosphate (DXP). This is 1-deoxy-D-xylulose-5-phosphate synthase from Francisella tularensis subsp. novicida (strain U112).